Here is a 190-residue protein sequence, read N- to C-terminus: Threonylcarbamoyl-AMP synthase (190 aa).

The region spanning 10-190 (PQDKESVYRH…DWHSRQVIRA (181 aa)) is the YrdC-like domain.

Belongs to the SUA5 family. TsaC subfamily.

The protein localises to the cytoplasm. It catalyses the reaction L-threonine + hydrogencarbonate + ATP = L-threonylcarbamoyladenylate + diphosphate + H2O. Functionally, required for the formation of a threonylcarbamoyl group on adenosine at position 37 (t(6)A37) in tRNAs that read codons beginning with adenine. Catalyzes the conversion of L-threonine, HCO(3)(-)/CO(2) and ATP to give threonylcarbamoyl-AMP (TC-AMP) as the acyladenylate intermediate, with the release of diphosphate. The sequence is that of Threonylcarbamoyl-AMP synthase from Dichelobacter nodosus (strain VCS1703A).